Here is a 740-residue protein sequence, read N- to C-terminus: Dipeptidyl peptidase family member 6 (740 aa).

Residue methionine 1 is a topological domain, cytoplasmic. The chain crosses the membrane as a helical; Signal-anchor for type II membrane protein span at residues 2-22 (LFLPILILNLLIITHAIDIIP). Residues 23–740 (REVLFQDPKY…VMNRIFPVQG (718 aa)) lie on the Lumenal side of the membrane. N-linked (GlcNAc...) asparagine glycosylation is found at asparagine 108, asparagine 308, and asparagine 506. Active-site charge relay system residues include serine 516, aspartate 604, and histidine 636. A disulfide bridge links cysteine 535 with cysteine 658. N-linked (GlcNAc...) asparagine glycosylation is present at asparagine 672.

The protein belongs to the peptidase S9B family. DPPIV subfamily.

It localises to the cell membrane. Removes N-terminal dipeptides sequentially from polypeptides. Essential for control of distal tip cell migration. The polypeptide is Dipeptidyl peptidase family member 6 (dpf-6) (Caenorhabditis elegans).